The sequence spans 357 residues: Probable nitronate monooxygenase (357 aa).

Residues asparagine 71, glutamine 175, glycine 180, glycine 219, and glutamine 238–threonine 241 contribute to the FMN site.

The protein belongs to the nitronate monooxygenase family. NMO class I subfamily. It depends on FMN as a cofactor.

The enzyme catalyses 3 propionate 3-nitronate + 3 O2 + H2O = 3 3-oxopropanoate + 2 nitrate + nitrite + H2O2 + 3 H(+). Nitronate monooxygenase that uses molecular oxygen to catalyze the oxidative denitrification of alkyl nitronates. Acts on propionate 3-nitronate (P3N), the presumed physiological substrate. Probably functions in the detoxification of P3N, a metabolic poison produced by plants and fungi as a defense mechanism. The sequence is that of Probable nitronate monooxygenase from Staphylococcus haemolyticus (strain JCSC1435).